The chain runs to 76 residues: Rhesus theta defensin-1/2 subunit B (76 aa).

Residues 1-22 (MRTFALLTAMLLLVALHAQAEA) form the signal peptide. Positions 23 to 64 (RQARADEAAAQQQPGADDQGMAHSFTRPENAALPLSESARGL) are excised as a propeptide. The tract at residues 25–54 (ARADEAAAQQQPGADDQGMAHSFTRPENAA) is disordered. A compositionally biased stretch (low complexity) spans 30–44 (AAAQQQPGADDQGMA). Arginine 65 is covalently cross-linked (Cyclopeptide (Arg-Cys) (interchain with C-73 in subunit A); in form RTD-1). Arginine 65 is covalently cross-linked (Cyclopeptide (Arg-Cys) (interchain with C-73 in subunit B); in form RTD-2). A disulfide bridge links cysteine 68 with cysteine 73. Residue cysteine 73 forms a Cyclopeptide (Cys-Arg) (interchain with R-65 in subunit A); in form RTD-1 linkage. Residue cysteine 73 forms a Cyclopeptide (Cys-Arg) (interchain with R-65 in subunit B); in form RTD-2 linkage. Residues 74-76 (QLL) constitute a propeptide that is removed on maturation.

It belongs to the alpha-defensin family. Theta subfamily. RTD-1 is a cyclic heterodimer composed of subunits A and B; disulfide-linked. RTD-2 is a cyclic homodimer composed of two subunits B; disulfide-linked. Forms a cyclic peptide with 1 subunit B (RTD-2) or with 1 subunit A (RTD-1). An additional intersubunit disulfide bond is formed. As to expression, RTD-1 is expressed in bone marrow. Detected in promyelocytes, myelocytes and mature neutrophils and monocytes.

In terms of biological role, RTD-1 and RTD-2 have similar antimicrobial activities against the Gram-positive bacteria S.aureus 502A and L.monocytogenes, the Gram-negative bacterium S.typhimurium, and the fungi C.albicans 16820 and C.neoformans 271A. RTD-2 is 2-3-fold less active than RTD-1 against E.coli ML35. This is Rhesus theta defensin-1/2 subunit B (RTD1B) from Macaca mulatta (Rhesus macaque).